We begin with the raw amino-acid sequence, 431 residues long: 5'-deoxyadenosine deaminase (431 aa).

Positions 65 and 67 each coordinate Zn(2+). Substrate contacts are provided by Glu-94 and His-185. His-212 provides a ligand contact to Zn(2+). Glu-215 and Asp-300 together coordinate substrate. Asp-300 lines the Zn(2+) pocket.

The protein belongs to the metallo-dependent hydrolases superfamily. MTA/SAH deaminase family. Homotetramer. Requires Zn(2+) as cofactor.

The enzyme catalyses 5'-deoxyadenosine + H2O + H(+) = 5'-deoxyinosine + NH4(+). It catalyses the reaction S-adenosyl-L-homocysteine + H2O + H(+) = S-inosyl-L-homocysteine + NH4(+). The catalysed reaction is S-methyl-5'-thioadenosine + H2O + H(+) = S-methyl-5'-thioinosine + NH4(+). It carries out the reaction adenosine + H2O + H(+) = inosine + NH4(+). The protein operates within amino-acid biosynthesis; S-adenosyl-L-methionine biosynthesis. Its function is as follows. Catalyzes the deamination of three SAM-derived enzymatic products, namely 5'-deoxyadenosine, S-adenosyl-L-homocysteine, and 5'-methylthioadenosine, to produce the inosine analogs. Can also deaminate adenosine. The preferred substrate for this enzyme is 5'-deoxyadenosine, but all these substrates are efficiently deaminated. Likely functions in a S-adenosyl-L-methionine (SAM) recycling pathway from S-adenosyl-L-homocysteine (SAH) produced from SAM-dependent methylation reactions. May also be involved in the recycling of 5'-deoxyadenosine, whereupon the 5'-deoxyribose moiety of 5'-deoxyinosine is further metabolized to deoxyhexoses used for the biosynthesis of aromatic amino acids in methanogens. The sequence is that of 5'-deoxyadenosine deaminase from Methanopyrus kandleri (strain AV19 / DSM 6324 / JCM 9639 / NBRC 100938).